A 393-amino-acid chain; its full sequence is NAD(P)H-quinone oxidoreductase subunit H, chloroplastic (393 aa).

The protein belongs to the complex I 49 kDa subunit family. NDH is composed of at least 16 different subunits, 5 of which are encoded in the nucleus.

It is found in the plastid. The protein resides in the chloroplast thylakoid membrane. The catalysed reaction is a plastoquinone + NADH + (n+1) H(+)(in) = a plastoquinol + NAD(+) + n H(+)(out). The enzyme catalyses a plastoquinone + NADPH + (n+1) H(+)(in) = a plastoquinol + NADP(+) + n H(+)(out). In terms of biological role, NDH shuttles electrons from NAD(P)H:plastoquinone, via FMN and iron-sulfur (Fe-S) centers, to quinones in the photosynthetic chain and possibly in a chloroplast respiratory chain. The immediate electron acceptor for the enzyme in this species is believed to be plastoquinone. Couples the redox reaction to proton translocation, and thus conserves the redox energy in a proton gradient. The sequence is that of NAD(P)H-quinone oxidoreductase subunit H, chloroplastic from Cicer arietinum (Chickpea).